We begin with the raw amino-acid sequence, 545 residues long: Chaperonin GroEL 1 (545 aa).

ATP contacts are provided by residues 30 to 33, K51, 87 to 91, G415, 479 to 481, and D495; these read TLGP, DGTTT, and NAA.

This sequence belongs to the chaperonin (HSP60) family. Forms a cylinder of 14 subunits composed of two heptameric rings stacked back-to-back. Interacts with the co-chaperonin GroES.

The protein localises to the cytoplasm. The catalysed reaction is ATP + H2O + a folded polypeptide = ADP + phosphate + an unfolded polypeptide.. Its function is as follows. Together with its co-chaperonin GroES, plays an essential role in assisting protein folding. The GroEL-GroES system forms a nano-cage that allows encapsulation of the non-native substrate proteins and provides a physical environment optimized to promote and accelerate protein folding. The polypeptide is Chaperonin GroEL 1 (Methylococcus capsulatus (strain ATCC 33009 / NCIMB 11132 / Bath)).